We begin with the raw amino-acid sequence, 1120 residues long: Cluster 41 polyketide synthase (1120 aa).

Residues 7 to 430 (PHDVAVVGMG…GTVSHAIIEK (424 aa)) form the Ketosynthase family 3 (KS3) domain. Active-site for beta-ketoacyl synthase activity residues include Cys-178, His-313, and His-353. The malonyl-CoA:ACP transacylase (MAT) domain stretch occupies residues 539–796 (VWVFSGHGAQ…TSAISAAAED (258 aa)). Residue Ser-625 is the For acyl/malonyl transferase activity of the active site. The ketoreductase (KR) domain stretch occupies residues 804 to 943 (IKKILSMESR…IAMQWTSWRE (140 aa)). A Carrier domain is found at 1042–1116 (DSLSRQVREC…HIVKWLMEKT (75 aa)). Ser-1076 bears the O-(pantetheine 4'-phosphoryl)serine mark.

In terms of biological role, polyketide synthase; part of the gene cluster 41 that mediates the biosynthesis of an extracellular and diffusible metabolite that is able to stimulate colony sclerotial production. This is Cluster 41 polyketide synthase from Aspergillus flavus (strain ATCC 200026 / FGSC A1120 / IAM 13836 / NRRL 3357 / JCM 12722 / SRRC 167).